The chain runs to 195 residues: Holliday junction branch migration complex subunit RuvA (195 aa).

A domain I region spans residues 1 to 64 (MIASIRGIIQ…EDALTLYGFS (64 aa)). The tract at residues 65 to 142 (DPAQRNLFEQ…DLRQLSGTTP (78 aa)) is domain II. Positions 143–151 (GNVSTLDRE) are flexible linker. The domain III stretch occupies residues 151-195 (ELTDILISLGYSATEAAAAIAALPGDAPPTLEERLRLALRYFGSA).

The protein belongs to the RuvA family. Homotetramer. Forms an RuvA(8)-RuvB(12)-Holliday junction (HJ) complex. HJ DNA is sandwiched between 2 RuvA tetramers; dsDNA enters through RuvA and exits via RuvB. An RuvB hexamer assembles on each DNA strand where it exits the tetramer. Each RuvB hexamer is contacted by two RuvA subunits (via domain III) on 2 adjacent RuvB subunits; this complex drives branch migration. In the full resolvosome a probable DNA-RuvA(4)-RuvB(12)-RuvC(2) complex forms which resolves the HJ.

The protein localises to the cytoplasm. Functionally, the RuvA-RuvB-RuvC complex processes Holliday junction (HJ) DNA during genetic recombination and DNA repair, while the RuvA-RuvB complex plays an important role in the rescue of blocked DNA replication forks via replication fork reversal (RFR). RuvA specifically binds to HJ cruciform DNA, conferring on it an open structure. The RuvB hexamer acts as an ATP-dependent pump, pulling dsDNA into and through the RuvAB complex. HJ branch migration allows RuvC to scan DNA until it finds its consensus sequence, where it cleaves and resolves the cruciform DNA. The chain is Holliday junction branch migration complex subunit RuvA from Chloroflexus aurantiacus (strain ATCC 29364 / DSM 637 / Y-400-fl).